A 354-amino-acid polypeptide reads, in one-letter code: Hyaluronan and proteoglycan link protein 1 (354 aa).

Residues 1-9 (MKSLLLLVL) constitute a propeptide that is removed on maturation. N-linked (GlcNAc...) asparagine glycans are attached at residues asparagine 21 and asparagine 56. Residues 38–152 (PRLLVEAEQA…EGLEDDTAVV (115 aa)) form the Ig-like V-type domain. Cystine bridges form between cysteine 61–cysteine 139, cysteine 181–cysteine 252, cysteine 205–cysteine 226, cysteine 279–cysteine 349, and cysteine 304–cysteine 325. Link domains follow at residues 159 to 254 (VVFP…FCFT) and 259 to 351 (GRFY…YCFR).

It belongs to the HAPLN family.

The protein resides in the secreted. It is found in the extracellular space. The protein localises to the extracellular matrix. Functionally, stabilizes the aggregates of proteoglycan monomers with hyaluronic acid in the extracellular cartilage matrix. The protein is Hyaluronan and proteoglycan link protein 1 (HAPLN1) of Sus scrofa (Pig).